Reading from the N-terminus, the 109-residue chain is MLSVSRVASRMTGVVARFSTGGHGDGAGRGGGSGGSIRDAGGAFGKMEAAREDEYFYKKQKAQLEELRKHIQQEVDHHKSQLENHQKVLDRHQKRISEIEAEERALGKE.

Disordered regions lie at residues 17–39 and 73–95; these read RFST…SIRD and QEVD…HQKR. Residues 21-35 show a composition bias toward gly residues; sequence GGHGDGAGRGGGSGG. Positions 45 to 109 form a coiled coil; that stretch reads GKMEAAREDE…EAEERALGKE (65 aa).

It belongs to the ATPase inhibitor family.

Its subcellular location is the mitochondrion. Its function is as follows. Thought to be a regulatory component of the ATP-synthesizing complex in the mitochondria. This Caenorhabditis briggsae protein is ATPase inhibitor mai-2, mitochondrial.